Here is a 259-residue protein sequence, read N- to C-terminus: MLDTTKLTMVGTGSAFSKKFYNNSALVTFTNGYNLLIDCGHSVPKGLHDLGFPLESLDGILITHTHADHIGGLEEVALYNKFVLGGRKIDLLVPEPLVEPLWNDSLNGGLRYDDSRELELDDYFTVRSLKTSDCGAARTQIDENIAFTLYTTLHVSHMKSYAVGLIDRGEEKVFYSSDTVFDEYLLDYALTMFPWVFHDCQLFTGGVHASLDELLGYTRYIPEKQQNKIFLMHYGDNVEEFIGKTGRMRFAEQGREIIL.

A beta-lactamase-like region spans residues 21–233; sequence YNNSALVTFT…KQQNKIFLMH (213 aa). His-64, His-66, Asp-68, His-69, His-154, Asp-178, and His-233 together coordinate Zn(2+).

Belongs to the anti-Pycsar protein Apyc1 family. As to quaternary structure, homodimer. Requires Zn(2+) as cofactor.

The enzyme catalyses 3',5'-cyclic CMP + H2O = CMP + H(+). It catalyses the reaction 3',5'-cyclic UMP + H2O = UMP + H(+). Its function is as follows. Counteracts the host Pycsar antiviral defense system. Phosphodiesterase that enables metal-dependent hydrolysis of host cyclic nucleotide Pycsar defense signals such as cCMP and cUMP. The sequence is that of Anti-Pycsar protein Apyc1 from Bacillus subtilis.